We begin with the raw amino-acid sequence, 932 residues long: GPI ethanolamine phosphate transferase 1 (932 aa).

Residues 1–8 (MISLNKKL) are Cytoplasmic-facing. Residues 9–29 (VLLVGVIFHVAFMWSIFDIYF) traverse the membrane as a helical segment. Over 30–456 (VSPLIHGMKH…TYNWLFLRTL (427 aa)) the chain is Lumenal. 3 N-linked (GlcNAc...) asparagine glycosylation sites follow: asparagine 138, asparagine 202, and asparagine 360. A helical membrane pass occupies residues 457-477 (VTIGFFGWIAVAFCSYLLAFV). At 478 to 486 (VQSDKPFTT) the chain is on the cytoplasmic side. The chain crosses the membrane as a helical span at residues 487 to 507 (SLPLKGVAYVALAILSGFFVF). Residues 508–509 (QK) lie on the Lumenal side of the membrane. Residues 510–530 (SPLHYHLYAVFPVVFWEAVLQ) traverse the membrane as a helical segment. At 531–551 (RRTAVAEGISILARRSTSKAP) the chain is on the cytoplasmic side. Residues 552 to 572 (ALAAILDIGLSLVLLEAIVYG) form a helical membrane-spanning segment. Over 573–577 (YFHRE) the chain is Lumenal. The helical transmembrane segment at 578–598 (IFSVCFGLATLWPFVHNFTVA) threads the bilayer. Over 599-603 (KREWP) the chain is Cytoplasmic. A helical transmembrane segment spans residues 604-624 (TTLAWVVMCAIMSSFTLLEVV). Topologically, residues 625 to 627 (KVE) are lumenal. The chain crosses the membrane as a helical span at residues 628 to 648 (SIEQILLSGALMLVIGLVFTI). The Cytoplasmic segment spans residues 649-653 (HLQRK). Residues 654–674 (LALAASTVCVLFAQILLVVAT) form a helical membrane-spanning segment. Topologically, residues 675-696 (MYFTRESVESLTARNGLPLFSQ) are lumenal. The chain crosses the membrane as a helical span at residues 697–717 (VGGWISLLLSLAVPFLHFLGS). Topologically, residues 718–737 (DAKDYRLRLLIIFLAFGPTF) are cytoplasmic. A helical transmembrane segment spans residues 738–758 (VILTISWEGFFYVCFFAILVI). Topologically, residues 759–786 (WIELETQMRDARVTPQTRADLTPGDFRM) are lumenal. Residues 787–807 (ALFTFFMSQIGFFGIGNIASI) traverse the membrane as a helical segment. Residues 808–828 (SSFSLDSVYRLIPVFDPFSMG) lie on the Cytoplasmic side of the membrane. Residues 829–849 (ALLMFKILVPFAVLSACLGIL) form a helical membrane-spanning segment. Residues 850–859 (NLKLGVPPSA) lie on the Lumenal side of the membrane. A helical transmembrane segment spans residues 860-880 (LFSMVLCVSDILTLNFFYLVV). At 881 to 900 (DEGSWLDIGTGISHYCIASG) the chain is on the cytoplasmic side. A helical membrane pass occupies residues 901 to 921 (LSLFMMVLEYLSGVLVAGVTI). At 922-932 (APHVSKIKKDM) the chain is on the lumenal side.

Belongs to the PIGG/PIGN/PIGO family. PIGN subfamily.

It localises to the endoplasmic reticulum membrane. Its pathway is glycolipid biosynthesis; glycosylphosphatidylinositol-anchor biosynthesis. Its function is as follows. Ethanolamine phosphate transferase involved in glycosylphosphatidylinositol-anchor biosynthesis. Transfers ethanolamine phosphate to the first alpha-1,4-linked mannose of the glycosylphosphatidylinositol precursor of GPI-anchor. This is GPI ethanolamine phosphate transferase 1 (MCD4) from Yarrowia lipolytica (strain CLIB 122 / E 150) (Yeast).